We begin with the raw amino-acid sequence, 114 residues long: Large ribosomal subunit protein uL22c (114 aa).

It belongs to the universal ribosomal protein uL22 family. As to quaternary structure, part of the 50S ribosomal subunit.

The protein resides in the plastid. The protein localises to the chloroplast. Functionally, this protein binds specifically to 23S rRNA. The globular domain of the protein is located near the polypeptide exit tunnel on the outside of the subunit, while an extended beta-hairpin is found that lines the wall of the exit tunnel in the center of the 70S ribosome. The chain is Large ribosomal subunit protein uL22c (rpl22) from Gracilaria tenuistipitata var. liui (Red alga).